A 297-amino-acid chain; its full sequence is ClpXP adapter protein SpxH (297 aa).

This sequence belongs to the SpxH family. In terms of assembly, interacts with Spx.

It localises to the cytoplasm. Its function is as follows. Adapter protein required for efficient degradation of Spx by ClpXP under non-stress conditions. Interaction with Spx stabilizes Spx and exposes the C-terminus of Spx for recognition and proteolysis by ClpXP. This Bacillus cereus (strain ZK / E33L) protein is ClpXP adapter protein SpxH.